We begin with the raw amino-acid sequence, 100 residues long: Urease subunit gamma (100 aa).

Belongs to the urease gamma subunit family. Heterotrimer of UreA (gamma), UreB (beta) and UreC (alpha) subunits. Three heterotrimers associate to form the active enzyme.

It localises to the cytoplasm. The enzyme catalyses urea + 2 H2O + H(+) = hydrogencarbonate + 2 NH4(+). It participates in nitrogen metabolism; urea degradation; CO(2) and NH(3) from urea (urease route): step 1/1. This is Urease subunit gamma from Pseudomonas syringae pv. syringae (strain B728a).